The following is a 222-amino-acid chain: Deoxyribose-phosphate aldolase (222 aa).

Asp89 acts as the Proton donor/acceptor in catalysis. Lys152 functions as the Schiff-base intermediate with acetaldehyde in the catalytic mechanism. The Proton donor/acceptor role is filled by Lys181.

Belongs to the DeoC/FbaB aldolase family. DeoC type 1 subfamily.

The protein localises to the cytoplasm. The enzyme catalyses 2-deoxy-D-ribose 5-phosphate = D-glyceraldehyde 3-phosphate + acetaldehyde. It participates in carbohydrate degradation; 2-deoxy-D-ribose 1-phosphate degradation; D-glyceraldehyde 3-phosphate and acetaldehyde from 2-deoxy-alpha-D-ribose 1-phosphate: step 2/2. Functionally, catalyzes a reversible aldol reaction between acetaldehyde and D-glyceraldehyde 3-phosphate to generate 2-deoxy-D-ribose 5-phosphate. The sequence is that of Deoxyribose-phosphate aldolase from Alkaliphilus oremlandii (strain OhILAs) (Clostridium oremlandii (strain OhILAs)).